The sequence spans 105 residues: Large ribosomal subunit protein eL36 (105 aa).

Positions 9-31 are disordered; the sequence is VGLNKGHKVTKNVSKPRHSRRRR. Residues 13–31 show a composition bias toward basic residues; sequence KGHKVTKNVSKPRHSRRRR. Lys62 carries the N6-acetyllysine modification.

The protein belongs to the eukaryotic ribosomal protein eL36 family. In terms of assembly, component of the large ribosomal subunit.

The protein localises to the cytoplasm. Its subcellular location is the cytosol. In terms of biological role, component of the large ribosomal subunit. The ribosome is a large ribonucleoprotein complex responsible for the synthesis of proteins in the cell. The sequence is that of Large ribosomal subunit protein eL36 (RPL36) from Oryctolagus cuniculus (Rabbit).